Here is a 191-residue protein sequence, read N- to C-terminus: Fe/S biogenesis protein NfuA (191 aa).

[4Fe-4S] cluster contacts are provided by Cys149 and Cys152.

The protein belongs to the NfuA family. In terms of assembly, homodimer. [4Fe-4S] cluster serves as cofactor.

Functionally, involved in iron-sulfur cluster biogenesis. Binds a 4Fe-4S cluster, can transfer this cluster to apoproteins, and thereby intervenes in the maturation of Fe/S proteins. Could also act as a scaffold/chaperone for damaged Fe/S proteins. This Salmonella typhi protein is Fe/S biogenesis protein NfuA.